The sequence spans 96 residues: Acylphosphatase (96 aa).

One can recognise an Acylphosphatase-like domain in the interval 9–96 (CAEIYVSGRV…DTFTDFFIKR (88 aa)). Catalysis depends on residues R24 and N42.

The protein belongs to the acylphosphatase family.

The enzyme catalyses an acyl phosphate + H2O = a carboxylate + phosphate + H(+). The chain is Acylphosphatase (acyP) from Methanococcoides burtonii (strain DSM 6242 / NBRC 107633 / OCM 468 / ACE-M).